Consider the following 468-residue polypeptide: Serine/threonine-protein kinase ULK3 (468 aa).

Residues 13-269 (FILTEKLGSG…FIEFFAHLFV (257 aa)) form the Protein kinase domain. ATP-binding positions include 19–27 (LGSGSYATV) and Lys-43. Asp-136 functions as the Proton acceptor in the catalytic mechanism. 2 consecutive MIT domains span residues 279 to 347 (TLEK…KVLV) and 374 to 442 (RLFS…KEQM).

This sequence belongs to the protein kinase superfamily. Ser/Thr protein kinase family. APG1/unc-51/ULK1 subfamily.

The protein localises to the cytoplasm. It catalyses the reaction L-seryl-[protein] + ATP = O-phospho-L-seryl-[protein] + ADP + H(+). The enzyme catalyses L-threonyl-[protein] + ATP = O-phospho-L-threonyl-[protein] + ADP + H(+). Functionally, serine/threonine protein kinase that acts as a regulator of Sonic hedgehog (SHH) signaling and autophagy. This is Serine/threonine-protein kinase ULK3 (ulk3) from Xenopus laevis (African clawed frog).